The primary structure comprises 896 residues: FHIP family protein C05D11.8 (896 aa).

The interval serine 823–aspartate 865 is disordered. Over residues leucine 853–aspartate 865 the composition is skewed to basic and acidic residues.

This sequence belongs to the FHIP family.

The protein is FHIP family protein C05D11.8 of Caenorhabditis elegans.